The sequence spans 134 residues: Flagellar basal-body rod protein FlgC (134 aa).

The protein belongs to the flagella basal body rod proteins family. The basal body constitutes a major portion of the flagellar organelle and consists of four rings (L,P,S, and M) mounted on a central rod. The rod consists of about 26 subunits of FlgG in the distal portion, and FlgB, FlgC and FlgF are thought to build up the proximal portion of the rod with about 6 subunits each.

Its subcellular location is the bacterial flagellum basal body. The protein is Flagellar basal-body rod protein FlgC (flgC) of Salmonella typhi.